Consider the following 286-residue polypeptide: Putative type II secretion system L-type protein YghE (286 aa).

A helical transmembrane segment spans residues 136–156 (VMILPILLILVALAVERGVTL).

Belongs to the GSP L family.

It is found in the cell inner membrane. Its function is as follows. Involved in a type II secretion system (T2SS, formerly general secretion pathway, GSP) for the export of folded proteins across the outer membrane. In Escherichia coli (strain K12), this protein is Putative type II secretion system L-type protein YghE.